The primary structure comprises 353 residues: Nuclear hormone receptor family member nhr-27 (353 aa).

The segment at residues 24 to 102 (VSNCVVCGRL…KGMLDLSRYT (79 aa)) is a DNA-binding region (nuclear receptor). 2 NR C4-type zinc fingers span residues 27–47 (CVVC…CSAC) and 64–85 (CKYS…CKFC). Positions 119-351 (ETLFLTMTVS…SQVHQDVIEF (233 aa)) constitute an NR LBD domain. The segment at 340-351 (QPSQVHQDVIEF) is AF-2.

It belongs to the nuclear hormone receptor family.

The protein resides in the nucleus. In terms of biological role, ligand-activated transcription factor. Involved in lifespan extension in a manner dependent upon mitochondrial function. This Caenorhabditis elegans protein is Nuclear hormone receptor family member nhr-27.